A 388-amino-acid polypeptide reads, in one-letter code: Protein TsgA homolog (388 aa).

12 helical membrane passes run 12–32, 51–71, 77–97, 102–122, 137–157, 163–183, 203–223, 246–266, 272–292, 294–314, 331–351, and 356–376; these read CISFLSYALTGALITITGIFL, TFLNAGILSSIFISSWITNII, LIFGFILTIIATLILIFSHNL, ISMFMLGIISGITMSIGTYII, LTDSFFSMSGIIFPIITALII, WYWVYFIIGIIYLIIFLITIN, FSILCLSISALLYILGQLSFI, SAFWMAYMVGMWIFSFILKFF, IITLSGISLFLMSLFNIFYDY, LLYIIILSLGFFSSAIYTIII, YILTSGTVGTLLTFIITGPIV, and IFSALLVSNILYGIVFFLVII.

The protein belongs to the major facilitator superfamily. TsgA family.

The protein localises to the cell membrane. This chain is Protein TsgA homolog, found in Buchnera aphidicola subsp. Baizongia pistaciae (strain Bp).